Reading from the N-terminus, the 307-residue chain is Mitochondrial brown fat uncoupling protein 1 (307 aa).

Residues 1 to 10 (MVSQTTSEVQ) lie on the Mitochondrial intermembrane side of the membrane. The chain crosses the membrane as a helical span at residues 11 to 32 (PTMGVKIFSAGVAACLADIITF). 3 Solcar repeats span residues 11–102 (PTMG…VQEY), 111–201 (PTLV…MKGA), and 210–295 (DDVP…LKKE). The Mitochondrial matrix segment spans residues 33–73 (PLDTAKVRLQIQGEGQTSSTIRYKGVLGTITTLAKTEGLPK). A fatty acid 16:0-binding site is contributed by Lys56. A helical transmembrane segment spans residues 74–96 (LYSGLPAGIQRQISFASLRIGLY). At 97-116 (DTVQEYFSSGKETPPTLVNR) the chain is on the mitochondrial intermembrane side. Residues 117–133 (ISAGLMTGGVAVFIGQP) form a helical membrane-spanning segment. At 134-178 (TEVVKVRLQAQSHLHGIKPRYTGTYNAYRIIATTESLSTLWKGTT) the chain is on the mitochondrial matrix side. The helical transmembrane segment at 179–195 (PNLLRNVIINCTELVTY) threads the bilayer. Residues 196–212 (DLMKGALVNNQILADDV) are Mitochondrial intermembrane-facing. A helical transmembrane segment spans residues 213–232 (PCHLLSALVAGFCTTFLASP). At 233-266 (ADVVKTRFINSLPGQYPSVPSCAMTMFTKEGPTA) the chain is on the mitochondrial matrix side. Cys254 is modified (cysteine sulfenic acid (-SOH)). Residues 267 to 289 (FFKGFVPSFLRLASWNVIMFVCF) traverse the membrane as a helical segment. Position 269 (Lys269) interacts with fatty acid 16:0. The Mitochondrial intermembrane portion of the chain corresponds to 290 to 307 (EQLKKELMKSRQTVDCTT).

The protein belongs to the mitochondrial carrier (TC 2.A.29) family. In terms of assembly, most probably functions as a monomer. Binds one purine nucleotide per monomer. However, has also been suggested to function as a homodimer or a homotetramer. Tightly associates with cardiolipin in the mitochondrion inner membrane; may stabilize and regulate its activity. Post-translationally, may undergo sulfenylation upon cold exposure. May increase the sensitivity of UCP1 thermogenic function to the activation by noradrenaline probably through structural effects. May undergo ubiquitin-mediated proteasomal degradation. In terms of tissue distribution, brown adipose tissue.

Its subcellular location is the mitochondrion inner membrane. It catalyses the reaction H(+)(in) = H(+)(out). Has no constitutive proton transporter activity and has to be activated by long-chain fatty acids/LCFAs. Inhibited by purine nucleotides. Both purine nucleotides and LCFAs bind the cytosolic side of the transporter and directly compete to activate or inhibit it. Activated by noradrenaline and reactive oxygen species. Despite lacking canonical translational encoding for selenocysteine, a small pool of the protein has been observed to selectively incorporate selenocysteine at 'Cys-254'. Selenocysteine-modified protein is highly sensitive to redox modification and may constitute a pool of protein highly sensitive to activation by elevated levels of reactive oxygen species (ROS). Functionally, mitochondrial protein responsible for thermogenic respiration, a specialized capacity of brown adipose tissue and beige fat that participates in non-shivering adaptive thermogenesis to temperature and diet variations and more generally to the regulation of energy balance. Functions as a long-chain fatty acid/LCFA and proton symporter, simultaneously transporting one LCFA and one proton through the inner mitochondrial membrane. However, LCFAs remaining associated with the transporter via their hydrophobic tails, it results in an apparent transport of protons activated by LCFAs. Thereby, dissipates the mitochondrial proton gradient and converts the energy of substrate oxydation into heat instead of ATP. Regulates the production of reactive oxygen species/ROS by mitochondria. The chain is Mitochondrial brown fat uncoupling protein 1 from Phodopus sungorus (Striped hairy-footed hamster).